We begin with the raw amino-acid sequence, 132 residues long: Large ribosomal subunit protein bL12 (132 aa).

Belongs to the bacterial ribosomal protein bL12 family. In terms of assembly, homodimer. Part of the ribosomal stalk of the 50S ribosomal subunit. Forms a multimeric L10(L12)X complex, where L10 forms an elongated spine to which 2 to 4 L12 dimers bind in a sequential fashion. Binds GTP-bound translation factors.

Its function is as follows. Forms part of the ribosomal stalk which helps the ribosome interact with GTP-bound translation factors. Is thus essential for accurate translation. This Chloroflexus aurantiacus (strain ATCC 29366 / DSM 635 / J-10-fl) protein is Large ribosomal subunit protein bL12.